The primary structure comprises 418 residues: Glutamyl-tRNA reductase (418 aa).

Residues 49–52 (TCNR), Ser108, 113–115 (EPQ), and Gln119 contribute to the substrate site. The active-site Nucleophile is Cys50. 188-193 (GAGETI) contributes to the NADP(+) binding site.

Belongs to the glutamyl-tRNA reductase family. Homodimer.

It carries out the reaction (S)-4-amino-5-oxopentanoate + tRNA(Glu) + NADP(+) = L-glutamyl-tRNA(Glu) + NADPH + H(+). Its pathway is porphyrin-containing compound metabolism; protoporphyrin-IX biosynthesis; 5-aminolevulinate from L-glutamyl-tRNA(Glu): step 1/2. Its function is as follows. Catalyzes the NADPH-dependent reduction of glutamyl-tRNA(Glu) to glutamate 1-semialdehyde (GSA). The protein is Glutamyl-tRNA reductase of Aliivibrio fischeri (strain ATCC 700601 / ES114) (Vibrio fischeri).